Consider the following 326-residue polypeptide: Protoheme IX farnesyltransferase (326 aa).

A run of 8 helical transmembrane segments spans residues 35-55 (LIPL…GWPL), 60-80 (LVCT…LNCL), 106-126 (SAFI…VSGV), 129-149 (LAAG…TALL), 157-177 (IVIG…AATG), 185-205 (WLFA…ALLL), 242-262 (GFGV…LLPF), and 283-303 (AKGL…LLIL).

It belongs to the UbiA prenyltransferase family. Protoheme IX farnesyltransferase subfamily.

The protein localises to the cell inner membrane. The enzyme catalyses heme b + (2E,6E)-farnesyl diphosphate + H2O = Fe(II)-heme o + diphosphate. The protein operates within porphyrin-containing compound metabolism; heme O biosynthesis; heme O from protoheme: step 1/1. Converts heme B (protoheme IX) to heme O by substitution of the vinyl group on carbon 2 of heme B porphyrin ring with a hydroxyethyl farnesyl side group. The protein is Protoheme IX farnesyltransferase of Parasynechococcus marenigrum (strain WH8102).